Here is a 477-residue protein sequence, read N- to C-terminus: V-type ATP synthase beta chain (477 aa).

This sequence belongs to the ATPase alpha/beta chains family.

In terms of biological role, produces ATP from ADP in the presence of a proton gradient across the membrane. The V-type beta chain is a regulatory subunit. The polypeptide is V-type ATP synthase beta chain (Anaeromyxobacter dehalogenans (strain 2CP-1 / ATCC BAA-258)).